Consider the following 430-residue polypeptide: Evolutionarily conserved signaling intermediate in Toll pathway, mitochondrial (430 aa).

The N-terminal 48 residues, 1–48 (MSWVQATLLARGLCRAWGGICRAALPGTSISQVPRQLPRGLHCSAAPH), are a transit peptide targeting the mitochondrion. A disordered region spans residues 41–66 (LHCSAAPHSSEQSLVSSPPEPRQRPT). A compositionally biased stretch (polar residues) spans 47–56 (PHSSEQSLVS). K372 is covalently cross-linked (Glycyl lysine isopeptide (Lys-Gly) (interchain with G-Cter in ubiquitin)). The interval 400-430 (LHTSSAGLEEPPPPEDHEEDDSRQRQQQGQS) is disordered. Residues 411–420 (PPPEDHEEDD) show a composition bias toward acidic residues.

It belongs to the ECSIT family. In terms of assembly, interacts with MAP3K1, SMAD4 and TRAF6. Interacts with SMAD1 only after BMP4-treatment. Part of the mitochondrial complex I assembly/MCIA complex that comprises at least the core subunits TMEM126B, NDUFAF1, ECSIT and ACAD9 and complement subunits such as COA1 and TMEM186. Interacts with NDUFAF1. Interacts with ACAD9. Interacts with TRIM59. Interacts with TMEM70 and TMEM242. Interacts (when ubiquitinated) with NF-kappa-B subunits RELA and NFKB1. Interacts with RIGI, IFIT1 and MAVS; these interactions promote RLR-mediated type I IFN induction. Interacts with SQSTM1; this interaction inhibits TLR4 signaling via functional regulation of the TRAF6-ECSIT complex. Interacts with cereblon/CRBN; this interaction inhibits the ubiquitination of ECSIT. In terms of processing, ubiquitinated on Lys-372; leading to translocation in the nucleus together with RELA and NFKB1 and expression of NF-kappa-B-dependent genes.

Its subcellular location is the cytoplasm. It localises to the nucleus. The protein resides in the mitochondrion. Functionally, adapter protein that plays a role in different signaling pathways including TLRs and IL-1 pathways or innate antiviral induction signaling. Plays a role in the activation of NF-kappa-B by forming a signal complex with TRAF6 and TAK1/MAP3K7 to activate TAK1/MAP3K7 leading to activation of IKKs. Once ubiquitinated, interacts with the dissociated RELA and NFKB1 proteins and translocates to the nucleus where it induces NF-kappa-B-dependent gene expression. Plays a role in innate antiviral immune response by bridging the pattern recognition receptors RIGI and MDA5/IFIT1 to the MAVS complex at the mitochondrion. Promotes proteolytic activation of MAP3K1. Involved in the BMP signaling pathway. Required for normal embryonic development. As part of the MCIA complex, involved in the assembly of the mitochondrial complex I. The sequence is that of Evolutionarily conserved signaling intermediate in Toll pathway, mitochondrial from Macaca fascicularis (Crab-eating macaque).